Reading from the N-terminus, the 566-residue chain is Protein OBERON 1 (566 aa).

Over residues 1 to 10 (MGTSSGSNLP) the composition is skewed to polar residues. Residues 1-79 (MGTSSGSNLP…KTGPDSHDQH (79 aa)) are disordered. Over residues 18-29 (QQLQTSLSLVSS) the composition is skewed to low complexity. The segment covering 47–60 (ESASSQETWPTSKS) has biased composition (polar residues). Residues 64–79 (RKTDSGKTGPDSHDQH) are compositionally biased toward basic and acidic residues. The PHD-type zinc-finger motif lies at 225–289 (LCMCVICNKF…LFKCRACNHT (65 aa)). A coiled-coil region spans residues 407 to 522 (EEKTRMYKKA…LFEKIKEQES (116 aa)). The tract at residues 545–566 (YNASSPRVDPRSNQRNPFRSNP) is disordered. Positions 555–566 (RSNQRNPFRSNP) are enriched in polar residues.

As to quaternary structure, self-interacts. Interacts with OBE2, OBE3 and OBE4. Binds to VPg of pea seed borne mosaic virus (PSbMV), turnip mosaic virus (TuMV) and lettuce mosaic virus (LMV), but not with VPg of tobacco etch virus (TEV), cowpea mosaic virus (CPMV), tomato black ring virus (TBRV) and grapevine fan leaf virus (GFLV). Interacts with RBL. As to expression, expressed in roots, seedlings, stems, leaves, flowers and siliques, especially in the vasculature.

It localises to the nucleus. Its subcellular location is the nucleoplasm. Probable transcription factor that acts together with OBE2 for the maintenance and/or establishment of both the shoot and root meristems, probably by controlling the expression of the meristem genes such as WUS, PLT1 and PLT2 and of genes required for auxin responses. Promotes cell meristematic activity via the WUSCHEL-CLAVATA pathway. Involved in the development of the basal pole and in auxin-mediated root and vascular development in the embryo. Confers sensitivity to turnip mosaic virus (TuMV) probably by promoting viral movement and multiplication via interaction with TuMV VPg. The sequence is that of Protein OBERON 1 from Arabidopsis thaliana (Mouse-ear cress).